We begin with the raw amino-acid sequence, 394 residues long: NAD(P)H-quinone oxidoreductase subunit H (394 aa).

The protein belongs to the complex I 49 kDa subunit family. NDH-1 can be composed of about 15 different subunits; different subcomplexes with different compositions have been identified which probably have different functions.

The protein localises to the cellular thylakoid membrane. The enzyme catalyses a plastoquinone + NADH + (n+1) H(+)(in) = a plastoquinol + NAD(+) + n H(+)(out). It catalyses the reaction a plastoquinone + NADPH + (n+1) H(+)(in) = a plastoquinol + NADP(+) + n H(+)(out). In terms of biological role, NDH-1 shuttles electrons from an unknown electron donor, via FMN and iron-sulfur (Fe-S) centers, to quinones in the respiratory and/or the photosynthetic chain. The immediate electron acceptor for the enzyme in this species is believed to be plastoquinone. Couples the redox reaction to proton translocation, and thus conserves the redox energy in a proton gradient. Cyanobacterial NDH-1 also plays a role in inorganic carbon-concentration. The sequence is that of NAD(P)H-quinone oxidoreductase subunit H from Synechococcus sp. (strain CC9902).